We begin with the raw amino-acid sequence, 299 residues long: Methionyl-tRNA formyltransferase (299 aa).

109-112 (SLLP) contributes to the (6S)-5,6,7,8-tetrahydrofolate binding site.

It belongs to the Fmt family.

The enzyme catalyses L-methionyl-tRNA(fMet) + (6R)-10-formyltetrahydrofolate = N-formyl-L-methionyl-tRNA(fMet) + (6S)-5,6,7,8-tetrahydrofolate + H(+). Functionally, attaches a formyl group to the free amino group of methionyl-tRNA(fMet). The formyl group appears to play a dual role in the initiator identity of N-formylmethionyl-tRNA by promoting its recognition by IF2 and preventing the misappropriation of this tRNA by the elongation apparatus. This Wolbachia pipientis subsp. Culex pipiens (strain wPip) protein is Methionyl-tRNA formyltransferase.